The following is a 370-amino-acid chain: 3-dehydroquinate synthase (370 aa).

NAD(+) is bound by residues 112–116 (GVIGD), 136–137 (TT), lysine 149, lysine 158, and 176–179 (TLAT). Residues glutamate 191, histidine 254, and histidine 276 each coordinate Zn(2+).

Belongs to the sugar phosphate cyclases superfamily. Dehydroquinate synthase family. The cofactor is Co(2+). Zn(2+) serves as cofactor. Requires NAD(+) as cofactor.

The protein resides in the cytoplasm. The enzyme catalyses 7-phospho-2-dehydro-3-deoxy-D-arabino-heptonate = 3-dehydroquinate + phosphate. The protein operates within metabolic intermediate biosynthesis; chorismate biosynthesis; chorismate from D-erythrose 4-phosphate and phosphoenolpyruvate: step 2/7. Functionally, catalyzes the conversion of 3-deoxy-D-arabino-heptulosonate 7-phosphate (DAHP) to dehydroquinate (DHQ). This is 3-dehydroquinate synthase from Xylella fastidiosa (strain M12).